Consider the following 307-residue polypeptide: Upstream stimulatory factor 1 (307 aa).

Disordered stretches follow at residues 104–131 (DDNG…SVGG) and 168–207 (QGGS…VERR). Residues 122-131 (PTDSSTSVGG) show a composition bias toward low complexity. Basic and acidic residues predominate over residues 187–207 (DGPRTTRDDKRRAQHNEVERR). Residues 196 to 251 (KRRAQHNEVERRRRDKINNWIVQLSKIIPDCSMESTKTGQSKGGILSKACDYIQEL) form the bHLH domain. A leucine-zipper region spans residues 268–289 (LQMDNEVLRQQVEDLKNNNLTL).

Efficient DNA binding requires dimerization with another bHLH protein. Binds DNA as a homodimer or a heterodimer. As to expression, oocyte and somatic tissue. Oocytic and somatic forms of this protein exist, probably as a result of post-translational modifications or minor splicing differences.

Its subcellular location is the nucleus. May act as a regulator of transcription factor IIIA (TFIIIA) gene expression. The polypeptide is Upstream stimulatory factor 1 (usf1) (Xenopus borealis (Kenyan clawed frog)).